Here is a 275-residue protein sequence, read N- to C-terminus: Small ribosomal subunit protein uS2 (275 aa).

The tract at residues 226–275 is disordered; sequence AAAPNSASVREEEFSAEAGDEGKGRRAPAKKATEKKADAPAAAPEAPAAE. Over residues 264-275 the composition is skewed to low complexity; it reads APAAAPEAPAAE.

The protein belongs to the universal ribosomal protein uS2 family.

This Xanthomonas campestris pv. campestris (strain ATCC 33913 / DSM 3586 / NCPPB 528 / LMG 568 / P 25) protein is Small ribosomal subunit protein uS2.